The following is a 448-amino-acid chain: Amino-acid acetyltransferase (448 aa).

In terms of domain architecture, N-acetyltransferase spans 295 to 433 (EQIRRANIND…KQVLYNYQRR (139 aa)).

This sequence belongs to the acetyltransferase family. ArgA subfamily. Homohexamer.

The protein resides in the cytoplasm. It catalyses the reaction L-glutamate + acetyl-CoA = N-acetyl-L-glutamate + CoA + H(+). It participates in amino-acid biosynthesis; L-arginine biosynthesis; N(2)-acetyl-L-ornithine from L-glutamate: step 1/4. The chain is Amino-acid acetyltransferase from Photorhabdus laumondii subsp. laumondii (strain DSM 15139 / CIP 105565 / TT01) (Photorhabdus luminescens subsp. laumondii).